The sequence spans 476 residues: Angiotensinogen (476 aa).

An N-terminal signal peptide occupies residues 1-24 (MAPAGMSLRATILCLLAWAGLAAG). Asn-38, Asn-161, Asn-295, and Asn-319 each carry an N-linked (GlcNAc...) asparagine glycan. Cys-42 and Cys-162 are disulfide-bonded.

The protein belongs to the serpin family. In response to low blood pressure, the enzyme renin/REN cleaves angiotensinogen to produce angiotensin-1. Angiotensin-1 is a substrate of ACE (angiotensin converting enzyme) that removes a dipeptide to yield the physiologically active peptide angiotensin-2. Angiotensin-1 and angiotensin-2 can be further processed to generate angiotensin-3, angiotensin-4. Angiotensin 1-9 is cleaved from angiotensin-1 by ACE2 and can be further processed by ACE to produce angiotensin 1-7, angiotensin 1-5 and angiotensin 1-4. Angiotensin 1-7 has also been proposed to be cleaved from angiotensin-2 by ACE2 or from angiotensin-1 by MME (neprilysin). Post-translationally, the disulfide bond is labile. Angiotensinogen is present in the circulation in a near 40:60 ratio with the oxidized disulfide-bonded form, which preferentially interacts with receptor-bound renin.

The protein localises to the secreted. Its function is as follows. Essential component of the renin-angiotensin system (RAS), a potent regulator of blood pressure, body fluid and electrolyte homeostasis. Functionally, acts directly on vascular smooth muscle as a potent vasoconstrictor, affects cardiac contractility and heart rate through its action on the sympathetic nervous system, and alters renal sodium and water absorption through its ability to stimulate the zona glomerulosa cells of the adrenal cortex to synthesize and secrete aldosterone. Acts by binding to angiotensin receptors AGTR1 and AGTR2. Also binds the DEAR/FBXW7-AS1 receptor. In terms of biological role, stimulates aldosterone release. Is a ligand for the G-protein coupled receptor MAS1. Has vasodilator and antidiuretic effects. Has an antithrombotic effect that involves MAS1-mediated release of nitric oxide from platelets. The chain is Angiotensinogen (AGT) from Gorilla gorilla gorilla (Western lowland gorilla).